The following is an 805-amino-acid chain: Zinc finger X-chromosomal protein (805 aa).

Serine 274 carries the phosphoserine modification. C2H2-type zinc fingers lie at residues 425-447 (YPCM…MKNH), 456-478 (YRCT…LESH), 488-510 (IECD…KMVH), 519-542 (HKCK…LAVH), 548-570 (HICV…MRIH), 576-599 (YQCQ…KTKH), 605-627 (FKCD…ALIH), 633-656 (HQCL…ISVH), 662-684 (HKCD…VAAH), 690-713 (HQCR…LSVH), 719-741 (FRCK…MKTH), 747-770 (YQCE…ISIH), and 776-798 (HRCE…IMRH).

The protein belongs to the krueppel C2H2-type zinc-finger protein family. ZFX/ZFY subfamily.

It localises to the nucleus. In terms of biological role, probable transcriptional activator. This Homo sapiens (Human) protein is Zinc finger X-chromosomal protein (ZFX).